The primary structure comprises 118 residues: Ribonuclease P protein component (118 aa).

This sequence belongs to the RnpA family. Consists of a catalytic RNA component (M1 or rnpB) and a protein subunit.

It catalyses the reaction Endonucleolytic cleavage of RNA, removing 5'-extranucleotides from tRNA precursor.. Its function is as follows. RNaseP catalyzes the removal of the 5'-leader sequence from pre-tRNA to produce the mature 5'-terminus. It can also cleave other RNA substrates such as 4.5S RNA. The protein component plays an auxiliary but essential role in vivo by binding to the 5'-leader sequence and broadening the substrate specificity of the ribozyme. In Rickettsia akari (strain Hartford), this protein is Ribonuclease P protein component.